We begin with the raw amino-acid sequence, 219 residues long: Hemolysin-3 (219 aa).

7 helical membrane passes run 19–39 (AITH…LIIH), 49–69 (VVAF…STLL), 83–103 (ILDH…FLLI), 112–132 (TLLA…IFFV), 138–158 (ASTL…KPLY), 165–185 (GFSL…FFLW), and 194–214 (IWHL…LFYV).

Belongs to the UPF0073 (Hly-III) family.

It is found in the cell membrane. Might be virulent against a mammalian host; when expressed in E.coli, the soluble extract has hemolytic activity on human erythrocytes. The activity is not inhibited by cholesterol or activated by 2-mercaptoethanol. Might be pore-forming protein. Its in vivo role in virulence is untested, nor has it been shown to be secreted by B.cereus. This is Hemolysin-3 from Bacillus cereus.